Consider the following 162-residue polypeptide: Large ribosomal subunit protein uL30 (162 aa).

This sequence belongs to the universal ribosomal protein uL30 family. In terms of assembly, part of the 50S ribosomal subunit.

The sequence is that of Large ribosomal subunit protein uL30 from Desulfurococcus amylolyticus (strain DSM 18924 / JCM 16383 / VKM B-2413 / 1221n) (Desulfurococcus kamchatkensis).